We begin with the raw amino-acid sequence, 245 residues long: DNA polymerase sliding clamp 1 (245 aa).

It belongs to the PCNA family. In terms of assembly, the subunits circularize to form a toroid; DNA passes through its center. Replication factor C (RFC) is required to load the toroid on the DNA. Forms a dimeric complex with PCNA3 and a trimeric complex with PCNA2 and PCNA3; does not form homotrimers.

Its function is as follows. Sliding clamp subunit that acts as a moving platform for DNA processing. Responsible for tethering the catalytic subunit of DNA polymerase and other proteins to DNA during high-speed replication. The trimeric complex inhibits DNA ligase and both 3'-5' and 5'-3' activity of Hel308 (Hjm) helicase, but stimulates Hjc, the Holliday junction cleavage enzyme. This Sulfurisphaera tokodaii (strain DSM 16993 / JCM 10545 / NBRC 100140 / 7) (Sulfolobus tokodaii) protein is DNA polymerase sliding clamp 1.